A 152-amino-acid chain; its full sequence is Xanthine-guanine phosphoribosyltransferase (152 aa).

Residues 37 to 38 (RG), R69, and 88 to 96 (DDLVDSGDT) contribute to the 5-phospho-alpha-D-ribose 1-diphosphate site. R69 contacts GMP. Position 89 (D89) interacts with Mg(2+). The guanine site is built by D92 and I135. Residues D92 and I135 each coordinate xanthine. GMP contacts are provided by residues 92–96 (DSGDT) and 134–135 (WI).

It belongs to the purine/pyrimidine phosphoribosyltransferase family. XGPT subfamily. As to quaternary structure, homotetramer. Mg(2+) is required as a cofactor.

The protein resides in the cell inner membrane. The enzyme catalyses GMP + diphosphate = guanine + 5-phospho-alpha-D-ribose 1-diphosphate. It catalyses the reaction XMP + diphosphate = xanthine + 5-phospho-alpha-D-ribose 1-diphosphate. The catalysed reaction is IMP + diphosphate = hypoxanthine + 5-phospho-alpha-D-ribose 1-diphosphate. The protein operates within purine metabolism; GMP biosynthesis via salvage pathway; GMP from guanine: step 1/1. It participates in purine metabolism; XMP biosynthesis via salvage pathway; XMP from xanthine: step 1/1. Purine salvage pathway enzyme that catalyzes the transfer of the ribosyl-5-phosphate group from 5-phospho-alpha-D-ribose 1-diphosphate (PRPP) to the N9 position of the 6-oxopurines guanine and xanthine to form the corresponding ribonucleotides GMP (guanosine 5'-monophosphate) and XMP (xanthosine 5'-monophosphate), with the release of PPi. To a lesser extent, also acts on hypoxanthine. The protein is Xanthine-guanine phosphoribosyltransferase of Aliivibrio fischeri (strain ATCC 700601 / ES114) (Vibrio fischeri).